The chain runs to 500 residues: Transcription termination factor MTERF8, chloroplastic (500 aa).

Residues 1–64 constitute a chloroplast transit peptide; sequence MVILSLVSCS…NHREPALTFR (64 aa).

The protein belongs to the mTERF family.

It is found in the plastid. It localises to the chloroplast. Its function is as follows. Transcription termination factor that is transcriptionally active in chloroplasts. The sequence is that of Transcription termination factor MTERF8, chloroplastic from Arabidopsis thaliana (Mouse-ear cress).